The chain runs to 95 residues: DNA-directed RNA polymerase subunit Rpo11 (95 aa).

The protein belongs to the archaeal Rpo11/eukaryotic RPB11/RPC19 RNA polymerase subunit family. In terms of assembly, part of the RNA polymerase complex.

It is found in the cytoplasm. The enzyme catalyses RNA(n) + a ribonucleoside 5'-triphosphate = RNA(n+1) + diphosphate. Functionally, DNA-dependent RNA polymerase (RNAP) catalyzes the transcription of DNA into RNA using the four ribonucleoside triphosphates as substrates. This Methanococcus vannielii (strain ATCC 35089 / DSM 1224 / JCM 13029 / OCM 148 / SB) protein is DNA-directed RNA polymerase subunit Rpo11.